The primary structure comprises 336 residues: Anthranilate phosphoribosyltransferase (336 aa).

Residues glycine 79, 82-83 (GD), threonine 87, 89-92 (NIST), 107-115 (KHGNRSVSS), and serine 119 contribute to the 5-phospho-alpha-D-ribose 1-diphosphate site. Glycine 79 contributes to the anthranilate binding site. Serine 91 contributes to the Mg(2+) binding site. Asparagine 110 is an anthranilate binding site. Residue arginine 165 participates in anthranilate binding. Mg(2+) contacts are provided by aspartate 224 and glutamate 225.

This sequence belongs to the anthranilate phosphoribosyltransferase family. Homodimer. Mg(2+) is required as a cofactor.

The enzyme catalyses N-(5-phospho-beta-D-ribosyl)anthranilate + diphosphate = 5-phospho-alpha-D-ribose 1-diphosphate + anthranilate. It participates in amino-acid biosynthesis; L-tryptophan biosynthesis; L-tryptophan from chorismate: step 2/5. Catalyzes the transfer of the phosphoribosyl group of 5-phosphorylribose-1-pyrophosphate (PRPP) to anthranilate to yield N-(5'-phosphoribosyl)-anthranilate (PRA). In Endomicrobium trichonymphae, this protein is Anthranilate phosphoribosyltransferase.